A 274-amino-acid polypeptide reads, in one-letter code: Energy-coupling factor transporter ATP-binding protein EcfA1 (274 aa).

An ABC transporter domain is found at 10–241 (ASFQGVYFSY…AAELQKIRLD (232 aa)). An ATP-binding site is contributed by 42-49 (GHNGSGKS).

Belongs to the ABC transporter superfamily. Energy-coupling factor EcfA family. As to quaternary structure, forms a stable energy-coupling factor (ECF) transporter complex composed of 2 membrane-embedded substrate-binding proteins (S component), 2 ATP-binding proteins (A component) and 2 transmembrane proteins (T component).

Its subcellular location is the cell membrane. ATP-binding (A) component of a common energy-coupling factor (ECF) ABC-transporter complex. Unlike classic ABC transporters this ECF transporter provides the energy necessary to transport a number of different substrates. This Mycoplasma pneumoniae (strain ATCC 29342 / M129 / Subtype 1) (Mycoplasmoides pneumoniae) protein is Energy-coupling factor transporter ATP-binding protein EcfA1.